The sequence spans 76 residues: U-actitoxin-Avd8c (76 aa).

Positions 1 to 16 (LVIVFVVLLGVPLISA) are cleaved as a signal peptide. The propeptide occupies 17-33 (NEEELLAILQDQRNDAR).

The protein belongs to the sea anemone 8 toxin family.

The protein localises to the secreted. It is found in the nematocyst. The chain is U-actitoxin-Avd8c from Anemonia viridis (Snakelocks anemone).